The sequence spans 427 residues: 3-phosphoshikimate 1-carboxyvinyltransferase (427 aa).

Positions 20, 21, and 25 each coordinate 3-phosphoshikimate. Lys-20 contacts phosphoenolpyruvate. Phosphoenolpyruvate is bound by residues Gly-92 and Arg-120. 3-phosphoshikimate is bound by residues Ser-166, Gln-168, Asp-312, and Lys-339. Residue Gln-168 coordinates phosphoenolpyruvate. The active-site Proton acceptor is the Asp-312. Phosphoenolpyruvate-binding residues include Arg-343 and Arg-385.

Belongs to the EPSP synthase family. As to quaternary structure, monomer.

It localises to the cytoplasm. The enzyme catalyses 3-phosphoshikimate + phosphoenolpyruvate = 5-O-(1-carboxyvinyl)-3-phosphoshikimate + phosphate. The protein operates within metabolic intermediate biosynthesis; chorismate biosynthesis; chorismate from D-erythrose 4-phosphate and phosphoenolpyruvate: step 6/7. Catalyzes the transfer of the enolpyruvyl moiety of phosphoenolpyruvate (PEP) to the 5-hydroxyl of shikimate-3-phosphate (S3P) to produce enolpyruvyl shikimate-3-phosphate and inorganic phosphate. This chain is 3-phosphoshikimate 1-carboxyvinyltransferase, found in Streptococcus pneumoniae (strain 70585).